The primary structure comprises 163 residues: uncharacterized protein (163 aa).

The next 4 membrane-spanning stretches (helical) occupy residues G19–I39, F63–L83, V87–A107, and F119–L139.

It belongs to the DoxX family.

Its subcellular location is the cell membrane. This is an uncharacterized protein from Mycobacterium tuberculosis (strain ATCC 25618 / H37Rv).